A 352-amino-acid polypeptide reads, in one-letter code: Alanine racemase (352 aa).

Residue lysine 33 is the Proton acceptor; specific for D-alanine of the active site. Lysine 33 carries the post-translational modification N6-(pyridoxal phosphate)lysine. Arginine 129 is a binding site for substrate. The active-site Proton acceptor; specific for L-alanine is tyrosine 250. A substrate-binding site is contributed by methionine 298.

Belongs to the alanine racemase family. The cofactor is pyridoxal 5'-phosphate.

It catalyses the reaction L-alanine = D-alanine. It functions in the pathway amino-acid biosynthesis; D-alanine biosynthesis; D-alanine from L-alanine: step 1/1. In terms of biological role, catalyzes the interconversion of L-alanine and D-alanine. May also act on other amino acids. The chain is Alanine racemase (alr) from Neisseria meningitidis serogroup C / serotype 2a (strain ATCC 700532 / DSM 15464 / FAM18).